The sequence spans 258 residues: Tropinone reductase-like 3 (258 aa).

19–43 (IVTASTQGIGFAIAYRLGLEGAAVV) provides a ligand contact to NAD(+). Ser-150 provides a ligand contact to substrate. Tyr-163 acts as the Proton acceptor in catalysis.

Belongs to the short-chain dehydrogenases/reductases (SDR) family.

In terms of biological role, has no tropinone reductase activity. The polypeptide is Tropinone reductase-like 3 (Erythroxylum coca (Coca plant)).